The sequence spans 532 residues: CTP synthase (532 aa).

The amidoligase domain stretch occupies residues 1–267 (MTKYIFVTGG…DDIVLEHLQL (267 aa)). Ser-13 provides a ligand contact to CTP. Position 13 (Ser-13) interacts with UTP. 14–19 (SIGKGI) serves as a coordination point for ATP. Residue Tyr-54 participates in L-glutamine binding. Asp-71 contributes to the ATP binding site. Mg(2+) is bound by residues Asp-71 and Glu-141. Residues 148 to 150 (DIE), 188 to 193 (KTKPTQ), and Lys-224 contribute to the CTP site. UTP is bound by residues 188–193 (KTKPTQ) and Lys-224. The region spanning 292–532 (RIGLVGKYVS…DFVGAALNNK (241 aa)) is the Glutamine amidotransferase type-1 domain. Gly-354 is an L-glutamine binding site. Cys-381 acts as the Nucleophile; for glutamine hydrolysis in catalysis. Residues 382–385 (LGMQ), Glu-405, and Arg-462 each bind L-glutamine. Residues His-507 and Glu-509 contribute to the active site.

The protein belongs to the CTP synthase family. In terms of assembly, homotetramer.

It carries out the reaction UTP + L-glutamine + ATP + H2O = CTP + L-glutamate + ADP + phosphate + 2 H(+). The enzyme catalyses L-glutamine + H2O = L-glutamate + NH4(+). It catalyses the reaction UTP + NH4(+) + ATP = CTP + ADP + phosphate + 2 H(+). Its pathway is pyrimidine metabolism; CTP biosynthesis via de novo pathway; CTP from UDP: step 2/2. Its activity is regulated as follows. Allosterically activated by GTP, when glutamine is the substrate; GTP has no effect on the reaction when ammonia is the substrate. The allosteric effector GTP functions by stabilizing the protein conformation that binds the tetrahedral intermediate(s) formed during glutamine hydrolysis. Inhibited by the product CTP, via allosteric rather than competitive inhibition. Functionally, catalyzes the ATP-dependent amination of UTP to CTP with either L-glutamine or ammonia as the source of nitrogen. Regulates intracellular CTP levels through interactions with the four ribonucleotide triphosphates. The polypeptide is CTP synthase (Listeria monocytogenes serotype 4b (strain F2365)).